The primary structure comprises 195 residues: Imidazoleglycerol-phosphate dehydratase (195 aa).

Belongs to the imidazoleglycerol-phosphate dehydratase family.

The protein localises to the cytoplasm. It carries out the reaction D-erythro-1-(imidazol-4-yl)glycerol 3-phosphate = 3-(imidazol-4-yl)-2-oxopropyl phosphate + H2O. The protein operates within amino-acid biosynthesis; L-histidine biosynthesis; L-histidine from 5-phospho-alpha-D-ribose 1-diphosphate: step 6/9. This chain is Imidazoleglycerol-phosphate dehydratase, found in Thermotoga petrophila (strain ATCC BAA-488 / DSM 13995 / JCM 10881 / RKU-1).